The following is a 396-amino-acid chain: NADH-quinone oxidoreductase subunit D (396 aa).

Belongs to the complex I 49 kDa subunit family. In terms of assembly, NDH-1 is composed of 14 different subunits. Subunits NuoB, C, D, E, F, and G constitute the peripheral sector of the complex.

Its subcellular location is the cell inner membrane. The catalysed reaction is a quinone + NADH + 5 H(+)(in) = a quinol + NAD(+) + 4 H(+)(out). Functionally, NDH-1 shuttles electrons from NADH, via FMN and iron-sulfur (Fe-S) centers, to quinones in the respiratory chain. The immediate electron acceptor for the enzyme in this species is believed to be ubiquinone. Couples the redox reaction to proton translocation (for every two electrons transferred, four hydrogen ions are translocated across the cytoplasmic membrane), and thus conserves the redox energy in a proton gradient. The sequence is that of NADH-quinone oxidoreductase subunit D from Chelativorans sp. (strain BNC1).